The sequence spans 454 residues: Probable DNA primase large subunit (454 aa).

4 residues coordinate [4Fe-4S] cluster: cysteine 280, cysteine 359, cysteine 375, and cysteine 415.

Belongs to the eukaryotic-type primase large subunit family. Heterodimer of a small subunit and a large subunit. It depends on [4Fe-4S] cluster as a cofactor.

DNA primase is the polymerase that synthesizes small RNA primers for the Okazaki fragments made during discontinuous DNA replication. In Arabidopsis thaliana (Mouse-ear cress), this protein is Probable DNA primase large subunit.